The chain runs to 246 residues: Type III pantothenate kinase (246 aa).

6-13 is an ATP binding site; that stretch reads DVGNTHSV. 103–106 provides a ligand contact to substrate; it reads GADR. Aspartate 105 (proton acceptor) is an active-site residue. A K(+)-binding site is contributed by aspartate 125. Threonine 128 is a binding site for ATP. Position 179 (threonine 179) interacts with substrate.

This sequence belongs to the type III pantothenate kinase family. As to quaternary structure, homodimer. The cofactor is NH4(+). K(+) is required as a cofactor.

It is found in the cytoplasm. It catalyses the reaction (R)-pantothenate + ATP = (R)-4'-phosphopantothenate + ADP + H(+). The protein operates within cofactor biosynthesis; coenzyme A biosynthesis; CoA from (R)-pantothenate: step 1/5. Functionally, catalyzes the phosphorylation of pantothenate (Pan), the first step in CoA biosynthesis. In Thermotoga maritima (strain ATCC 43589 / DSM 3109 / JCM 10099 / NBRC 100826 / MSB8), this protein is Type III pantothenate kinase (coaX).